The sequence spans 248 residues: 5'-nucleotidase SurE (248 aa).

A divalent metal cation contacts are provided by D8, D9, S39, and N91.

This sequence belongs to the SurE nucleotidase family. Requires a divalent metal cation as cofactor.

It localises to the cytoplasm. The enzyme catalyses a ribonucleoside 5'-phosphate + H2O = a ribonucleoside + phosphate. Functionally, nucleotidase that shows phosphatase activity on nucleoside 5'-monophosphates. This is 5'-nucleotidase SurE from Neisseria meningitidis serogroup B (strain ATCC BAA-335 / MC58).